The primary structure comprises 542 residues: Phosphoenolpyruvate carboxykinase (ATP) (542 aa).

Arg67, Tyr208, and Lys214 together coordinate substrate. ATP-binding positions include Lys214, His233, and 249–257; that span reads GLSGTGKTT. Mn(2+) is bound by residues Lys214 and His233. Asp270 contributes to the Mn(2+) binding site. ATP contacts are provided by residues Glu298, Arg334, 450-451, and Thr456; that span reads RI. Residue Arg334 participates in substrate binding.

It belongs to the phosphoenolpyruvate carboxykinase (ATP) family. Monomer. Mn(2+) serves as cofactor.

The protein localises to the cytoplasm. The catalysed reaction is oxaloacetate + ATP = phosphoenolpyruvate + ADP + CO2. Its pathway is carbohydrate biosynthesis; gluconeogenesis. In terms of biological role, involved in the gluconeogenesis. Catalyzes the conversion of oxaloacetate (OAA) to phosphoenolpyruvate (PEP) through direct phosphoryl transfer between the nucleoside triphosphate and OAA. The sequence is that of Phosphoenolpyruvate carboxykinase (ATP) from Vibrio campbellii (strain ATCC BAA-1116).